The primary structure comprises 210 residues: Interleukin-6 (210 aa).

Residues 1–25 (MNSLSTSAFSPVAFSLGLLLVMATA) form the signal peptide. An intrachain disulfide couples Cys72 to Cys78. At Ser81 the chain carries Phosphoserine. Cysteines 101 and 111 form a disulfide.

Belongs to the IL-6 superfamily. In terms of assembly, component of a hexamer of two molecules each of IL6, IL6R and IL6ST; first binds to IL6R to associate with the signaling subunit IL6ST. Interacts with IL6R (via the N-terminal ectodomain); this interaction may be affected by IL6R-binding with SORL1, hence decreasing IL6 cis signaling. Interacts with SORL1 (via the N-terminal ectodomain); this interaction leads to IL6 internalization and lysosomal degradation. May form a trimeric complex with the soluble SORL1 ectodomain and soluble IL6R receptor; this interaction might stabilize circulating IL6, hence promoting IL6 trans signaling.

It localises to the secreted. Functionally, cytokine with a wide variety of biological functions in immunity, tissue regeneration, and metabolism. Binds to IL6R, then the complex associates to the signaling subunit IL6ST/gp130 to trigger the intracellular IL6-signaling pathway. The interaction with the membrane-bound IL6R and IL6ST stimulates 'classic signaling', whereas the binding of IL6 and soluble IL6R to IL6ST stimulates 'trans-signaling'. Alternatively, 'cluster signaling' occurs when membrane-bound IL6:IL6R complexes on transmitter cells activate IL6ST receptors on neighboring receiver cells. Its function is as follows. IL6 is a potent inducer of the acute phase response. Rapid production of IL6 contributes to host defense during infection and tissue injury, but excessive IL6 synthesis is involved in disease pathology. In the innate immune response, is synthesized by myeloid cells, such as macrophages and dendritic cells, upon recognition of pathogens through toll-like receptors (TLRs) at the site of infection or tissue injury. In the adaptive immune response, is required for the differentiation of B cells into immunoglobulin-secreting cells. Plays a major role in the differentiation of CD4(+) T cell subsets. Essential factor for the development of T follicular helper (Tfh) cells that are required for the induction of germinal-center formation. Required to drive naive CD4(+) T cells to the Th17 lineage. Also required for proliferation of myeloma cells and the survival of plasmablast cells. Acts as an essential factor in bone homeostasis and on vessels directly or indirectly by induction of VEGF, resulting in increased angiogenesis activity and vascular permeability. Induces, through 'trans-signaling' and synergistically with IL1B and TNF, the production of VEGF. Involved in metabolic controls, is discharged into the bloodstream after muscle contraction increasing lipolysis and improving insulin resistance. 'Trans-signaling' in central nervous system also regulates energy and glucose homeostasis. Mediates, through GLP-1, crosstalk between insulin-sensitive tissues, intestinal L cells and pancreatic islets to adapt to changes in insulin demand. Also acts as a myokine. Plays a protective role during liver injury, being required for maintenance of tissue regeneration. Also has a pivotal role in iron metabolism by regulating HAMP/hepcidin expression upon inflammation or bacterial infection. Through activation of IL6ST-YAP-NOTCH pathway, induces inflammation-induced epithelial regeneration. This chain is Interleukin-6 (IL6), found in Mustela putorius furo (European domestic ferret).